We begin with the raw amino-acid sequence, 264 residues long: MSAISSVFSSDKSVFIPYISLGDPDYESCISWADALIRGGAGILELGIPFSDPVADGPVIQKAFKRALAYPFSMKKILEITAEIHKLHPETPLVYLTYFNPLYSMGLEAFTESAKNSGIQGLIIPDLPFDTSEAEEFFSQLERKKIDFIHLVTPATTIDRIQSMKSFASGFIYYVTSYGVTGERRALAVGLKERIQMVRNKVGLPVCAGFGISTADQAKEISTYANGVIIGSAVQKIIEESGSNREVCISKLFTYASEIRASMK.

Catalysis depends on proton acceptor residues Glu45 and Asp56.

This sequence belongs to the TrpA family. As to quaternary structure, tetramer of two alpha and two beta chains.

It catalyses the reaction (1S,2R)-1-C-(indol-3-yl)glycerol 3-phosphate + L-serine = D-glyceraldehyde 3-phosphate + L-tryptophan + H2O. It functions in the pathway amino-acid biosynthesis; L-tryptophan biosynthesis; L-tryptophan from chorismate: step 5/5. In terms of biological role, the alpha subunit is responsible for the aldol cleavage of indoleglycerol phosphate to indole and glyceraldehyde 3-phosphate. In Leptospira borgpetersenii serovar Hardjo-bovis (strain JB197), this protein is Tryptophan synthase alpha chain.